A 449-amino-acid polypeptide reads, in one-letter code: UDP-N-acetylmuramoylalanine--D-glutamate ligase (449 aa).

118–124 is an ATP binding site; sequence GTNGKTT.

The protein belongs to the MurCDEF family.

It is found in the cytoplasm. The enzyme catalyses UDP-N-acetyl-alpha-D-muramoyl-L-alanine + D-glutamate + ATP = UDP-N-acetyl-alpha-D-muramoyl-L-alanyl-D-glutamate + ADP + phosphate + H(+). It functions in the pathway cell wall biogenesis; peptidoglycan biosynthesis. Cell wall formation. Catalyzes the addition of glutamate to the nucleotide precursor UDP-N-acetylmuramoyl-L-alanine (UMA). This is UDP-N-acetylmuramoylalanine--D-glutamate ligase from Staphylococcus haemolyticus (strain JCSC1435).